Here is a 478-residue protein sequence, read N- to C-terminus: Sphingomyelin synthase-related protein 1 (478 aa).

A compositionally biased stretch (low complexity) spans 1–22 (MPAGSRAGSRLRSGSLPRPSRL). The segment at 1-65 (MPAGSRAGSR…TAEEVEKEMA (65 aa)) is disordered. Residues 75 to 141 (WTTKHVAVWL…MLSVRKLQKI (67 aa)) form the SAM domain. 6 consecutive transmembrane segments (helical) span residues 216 to 236 (ILSCVYVFIVFGFTSFIMVIV), 264 to 284 (FSMTEVCGVILCYIWILVLLL), 295 to 315 (LCSLMGTVFLLRCFTMFVTSL), 341 to 361 (AIWSGFGMTLTGVHTCGDYMF), 385 to 405 (FLHTLSWVLNLFGIFFILAAH), and 410 to 430 (IDVFIAFYITTRLFLYYHTLA). At 431–478 (NTRAYHQSRRARIWFPMFSFFECNVNGTVPNEYCWPFSKPAIMKRLIG) the chain is on the cytoplasmic side.

The protein belongs to the sphingomyelin synthase family. As to expression, expressed ubiquitously with highest levels in macrophages and testis.

The protein localises to the endoplasmic reticulum membrane. The catalysed reaction is an N-acylsphing-4-enine + a 1,2-diacyl-sn-glycero-3-phosphoethanolamine = an N-acylsphing-4-enine 1-phosphoethanolamine + a 1,2-diacyl-sn-glycerol. It catalyses the reaction an N-acylsphinganine + a 1,2-diacyl-sn-glycero-3-phosphoethanolamine = an N-acylsphinganine-1-phosphoethanolamine + a 1,2-diacyl-sn-glycerol. It carries out the reaction an N-acyl-(4R)-4-hydroxysphinganine + a 1,2-diacyl-sn-glycero-3-phosphoethanolamine = an N-acyl-(4R)-4-hydroxysphinganine-1-phosphoethanolamine + a 1,2-diacyl-sn-glycerol. The enzyme catalyses N-hexadecanoylsphinganine + a 1,2-diacyl-sn-glycero-3-phosphoethanolamine = N-hexadecanoyl-sphinganine-1-phosphoethanolamine + a 1,2-diacyl-sn-glycerol. The catalysed reaction is N-hexadecanoyl-(4R)-hydroxysphinganine + a 1,2-diacyl-sn-glycero-3-phosphoethanolamine = N-hexadecanoyl-(4R)-hydroxysphinganine-1-phosphoethanolamine + a 1,2-diacyl-sn-glycerol. It functions in the pathway sphingolipid metabolism. In terms of biological role, synthesizes sphingolipids through transfer of a phosphatidyl head group from a glycerophospholipid on to the primary hydroxyl of a ceramide in the lumen of the endoplasmic reticulum. Catalyzes the synthesis of ceramide phosphoethanolamines (CPEs) (such as N-acylsphing-4-enine 1-phosphoethanolamine) by transferring phosphoethanolamine head group, which is smaller and more hydrophilic than the phosphocholine (PC) headgroup transferred in the canonical sphingomyelin synthesis (SMS) reaction by SMS1 or SMS2, from a phosphatidylethanolamine (1,2-diacyl-sn-glycero-3-phosphoethanolamine, PE) to a ceramide (such as N-acylsphing-4-enine). The larger PC prevents an efficient fit in the enzyme's catalytic pocket, leading to little or no SMS activity. In vitro, in the absence of ceramide, it has PLC activity with preference for phosphatidylinositol and phosphatidic acid, but also hydrolyzes phosphatidylethanolamine. The sequence is that of Sphingomyelin synthase-related protein 1 from Mus musculus (Mouse).